A 166-amino-acid chain; its full sequence is MPSDNFIDKAFSAMSDVVMKVIPTDQKSKDAFKYYRSGMAAQVDGNYAKALGNYTEALALEEDPFDKSYILYNMGLIFANNGDHEKALDYYHQSLELNPNLVQALYNTGVILHYKGEQAEEAAELDEAERFFDLAADFWKRAIKIAPNNYSEVQNWLKTTGRVGVG.

3 TPR repeats span residues 31–64 (AFKY…EEDP), 68–101 (SYIL…NPNL), and 116–149 (GEQA…APNN).

This sequence belongs to the Ycf3 family.

It localises to the cellular thylakoid membrane. Essential for the assembly of the photosystem I (PSI) complex. May act as a chaperone-like factor to guide the assembly of the PSI subunits. This chain is Photosystem I assembly protein Ycf3, found in Acaryochloris marina (strain MBIC 11017).